Consider the following 78-residue polypeptide: Large ribosomal subunit protein uL29 (78 aa).

It belongs to the universal ribosomal protein uL29 family.

The polypeptide is Large ribosomal subunit protein uL29 (Rhodococcus opacus (strain B4)).